Consider the following 248-residue polypeptide: Ubiquinone biosynthesis O-methyltransferase (248 aa).

S-adenosyl-L-methionine is bound by residues Arg-40, Gly-71, Asp-92, and Met-135.

It belongs to the methyltransferase superfamily. UbiG/COQ3 family.

The catalysed reaction is a 3-demethylubiquinol + S-adenosyl-L-methionine = a ubiquinol + S-adenosyl-L-homocysteine + H(+). It carries out the reaction a 3-(all-trans-polyprenyl)benzene-1,2-diol + S-adenosyl-L-methionine = a 2-methoxy-6-(all-trans-polyprenyl)phenol + S-adenosyl-L-homocysteine + H(+). It participates in cofactor biosynthesis; ubiquinone biosynthesis. Functionally, O-methyltransferase that catalyzes the 2 O-methylation steps in the ubiquinone biosynthetic pathway. This chain is Ubiquinone biosynthesis O-methyltransferase, found in Ruegeria pomeroyi (strain ATCC 700808 / DSM 15171 / DSS-3) (Silicibacter pomeroyi).